The chain runs to 394 residues: QWRF motif-containing protein 7 (394 aa).

The segment at 1-171 is disordered; it reads MATTGRRLRP…ESPVSKAKIR (171 aa). The span at 14 to 67 shows a compositional bias: low complexity; the sequence is NNNRSRTISSSISLPVSLNASLSSSTSSSSSSSPSNSSKRVMITRSQSTTRSSR. Residues 85–96 show a composition bias toward polar residues; it reads NSASRSQEINNG. Basic and acidic residues predominate over residues 97–110; that stretch reads RSRESFARYLEQRT. 2 stretches are compositionally biased toward polar residues: residues 111–120 and 142–157; these read RGSPRSNASS and TMKTPLSSSAPTTSMC. The QWRF motif motif lies at 211–214; it reads QWRF.

It belongs to the QWRF family.

The polypeptide is QWRF motif-containing protein 7 (QWRF7) (Arabidopsis thaliana (Mouse-ear cress)).